Reading from the N-terminus, the 957-residue chain is Translation initiation factor IF-2 (957 aa).

2 disordered regions span residues 34 to 282 and 311 to 367; these read KSHS…RVVK and SQSL…TIAG. Pro residues predominate over residues 107 to 161; that stretch reads PARPQPPQAPTRPTPPAPVAPKPVEPVAAKPPAPPAKPEPTPPRPVPTLVPPPTR. Residues 163 to 188 show a composition bias toward basic and acidic residues; that stretch reads TKKEEKVAATPPPRKELKEPPKKEKG. Over residues 209-242 the composition is skewed to pro residues; that stretch reads PPAPAKPPEMAPKPALPELQPPPKPVRAPNPPKP. Basic and acidic residues-rich tracts occupy residues 250 to 259 and 266 to 275; these read LDDKSVSKVI and KDFDEEESKR. Residues 444–617 enclose the tr-type G domain; that stretch reads RRPPVVTIMG…LLVAEVEDLY (174 aa). The segment at 453 to 460 is G1; it reads GHVDHGKT. Position 453–460 (453–460) interacts with GTP; the sequence is GHVDHGKT. The segment at 478–482 is G2; it reads GITQH. Positions 503–506 are G3; the sequence is DTPG. Residues 503-507 and 557-560 each bind GTP; these read DTPGH and NKID. The interval 557 to 560 is G4; it reads NKID. The G5 stretch occupies residues 593–595; sequence SAL.

The protein belongs to the TRAFAC class translation factor GTPase superfamily. Classic translation factor GTPase family. IF-2 subfamily.

The protein resides in the cytoplasm. In terms of biological role, one of the essential components for the initiation of protein synthesis. Protects formylmethionyl-tRNA from spontaneous hydrolysis and promotes its binding to the 30S ribosomal subunits. Also involved in the hydrolysis of GTP during the formation of the 70S ribosomal complex. The protein is Translation initiation factor IF-2 of Thermosynechococcus vestitus (strain NIES-2133 / IAM M-273 / BP-1).